The chain runs to 467 residues: UPF0236 protein TTE0033/TTE0744/TTE0838/TTE0852/TTE1082/TTE1247/TTE1519/TTE1678/TTE1739/TTE1823/TTE2212 (467 aa).

It belongs to the UPF0236 family.

The sequence is that of UPF0236 protein TTE0033/TTE0744/TTE0838/TTE0852/TTE1082/TTE1247/TTE1519/TTE1678/TTE1739/TTE1823/TTE2212 from Caldanaerobacter subterraneus subsp. tengcongensis (strain DSM 15242 / JCM 11007 / NBRC 100824 / MB4) (Thermoanaerobacter tengcongensis).